We begin with the raw amino-acid sequence, 709 residues long: Polyribonucleotide nucleotidyltransferase (709 aa).

Asp-491 and Asp-497 together coordinate Mg(2+). Residues 557–617 enclose the KH domain; the sequence is PKSESFMIPP…ENLQKAKTFI (61 aa). The S1 motif domain occupies 641–709; the sequence is GERFVGKIKK…KNKVELGLVE (69 aa).

This sequence belongs to the polyribonucleotide nucleotidyltransferase family. Requires Mg(2+) as cofactor.

Its subcellular location is the cytoplasm. The enzyme catalyses RNA(n+1) + phosphate = RNA(n) + a ribonucleoside 5'-diphosphate. In terms of biological role, involved in mRNA degradation. Catalyzes the phosphorolysis of single-stranded polyribonucleotides processively in the 3'- to 5'-direction. The protein is Polyribonucleotide nucleotidyltransferase of Helicobacter hepaticus (strain ATCC 51449 / 3B1).